Reading from the N-terminus, the 184-residue chain is Leucine-rich repeat-containing protein 20 (184 aa).

LRR repeat units follow at residues 23–44 (GSDT…IYKV), 51–72 (QIHL…FMTT), 75–96 (QLRE…VSSL), 98–120 (HLRA…TTLP), 121–141 (ALET…EKLA), and 145–167 (ALRV…APPL). Phosphoserine is present on Ser-175.

The chain is Leucine-rich repeat-containing protein 20 (Lrrc20) from Mus musculus (Mouse).